Here is a 79-residue protein sequence, read N- to C-terminus: Anti-insect Ac4 (79 aa).

An N-terminal signal peptide occupies residues 1 to 17; that stretch reads MISLSLLLMIGVESVRD. The LCN-type CS-alpha/beta domain maps to 18 to 77; the sequence is GYIVDFKNCVYRCVPPCDGLCKKNGGKGGSCSFLIGSGLACWCNALPDNVPIKDPLHKCP. 4 cysteine pairs are disulfide-bonded: Cys-26–Cys-76, Cys-30–Cys-48, Cys-34–Cys-58, and Cys-38–Cys-60.

It belongs to the long (4 C-C) scorpion toxin superfamily. Sodium channel inhibitor family. Alpha subfamily. As to expression, expressed by the venom gland.

The protein localises to the secreted. Alpha toxins bind voltage-independently at site-3 of sodium channels (Nav) and inhibit the inactivation of the activated channels, thereby blocking neuronal transmission. This protein is weakly toxic against insects (ED(50)&gt;2 ug per 100 mg of blowfly larvae), but is inactive against mammalian sodium channels (rNav1.2a, and rNav1.4). This Androctonus crassicauda (Arabian fat-tailed scorpion) protein is Anti-insect Ac4.